The following is a 719-amino-acid chain: Transcription factor E4F1 (719 aa).

The required for ubiquitin ligase activity stretch occupies residues 20–63 (NIITIQTTLGDEDEDIHKCGKCLAEFSALDAFIQHKLSRSCKRT). The interval 59-125 (SCKRTQDPQT…SEDESSSPSK (67 aa)) is disordered. Residues 98–109 (EKQDAKVASGDK) show a composition bias toward basic and acidic residues. A mediates dimerization and DNA-binding region spans residues 128–207 (WKLNTEGRYV…GLAFRESGAL (80 aa)). C2H2-type zinc fingers lie at residues 136–158 (YVCDICAKTFKTTNILRTHMFTH) and 164–186 (FVCEMCETAFRTKGSLIRHKRRH). The segment at 192-216 (YRCNQCGLAFRESGALTRHLKSLTP) adopts a C2H2-type 3; degenerate zinc-finger fold. C2H2-type zinc fingers lie at residues 365–387 (YKCPHCERMFKTLNYLRVHVKGH), 393–415 (FKCLTCQKEFLTGYVLKKHMETH), 421–443 (YKCGECGKQFKAIGHVREHMRAH), 449–471 (YHCSFCDKSYKTKNALQVHHRTH), and 477–499 (YVCQHCSRGFREKSALVRHIRHH). A C2H2-type 9; degenerate zinc finger spans residues 505–527 (FKCSKCGRGFAEHGTLNRHLRAK).

The protein localises to the nucleus. It localises to the nucleoplasm. It is found in the cytoplasm. It carries out the reaction S-ubiquitinyl-[E2 ubiquitin-conjugating enzyme]-L-cysteine + [acceptor protein]-L-lysine = [E2 ubiquitin-conjugating enzyme]-L-cysteine + N(6)-ubiquitinyl-[acceptor protein]-L-lysine.. The protein operates within protein modification; protein ubiquitination. May function as a transcriptional repressor. May also function as a ubiquitin ligase. Functions in cell survival and proliferation through control of the cell cycle. The protein is Transcription factor E4F1 (e4f1) of Danio rerio (Zebrafish).